Here is a 291-residue protein sequence, read N- to C-terminus: ATP synthase gamma chain (291 aa).

This sequence belongs to the ATPase gamma chain family. As to quaternary structure, F-type ATPases have 2 components, CF(1) - the catalytic core - and CF(0) - the membrane proton channel. CF(1) has five subunits: alpha(3), beta(3), gamma(1), delta(1), epsilon(1). CF(0) has three main subunits: a, b and c.

The protein resides in the cell inner membrane. Its function is as follows. Produces ATP from ADP in the presence of a proton gradient across the membrane. The gamma chain is believed to be important in regulating ATPase activity and the flow of protons through the CF(0) complex. The protein is ATP synthase gamma chain of Neisseria meningitidis serogroup A / serotype 4A (strain DSM 15465 / Z2491).